A 311-amino-acid polypeptide reads, in one-letter code: 4-hydroxy-tetrahydrodipicolinate synthase (311 aa).

A pyruvate-binding site is contributed by Thr-51. The active-site Proton donor/acceptor is the Tyr-140. The active-site Schiff-base intermediate with substrate is the Lys-168. Ile-209 contacts pyruvate.

The protein belongs to the DapA family. Homotetramer; dimer of dimers.

It localises to the cytoplasm. It catalyses the reaction L-aspartate 4-semialdehyde + pyruvate = (2S,4S)-4-hydroxy-2,3,4,5-tetrahydrodipicolinate + H2O + H(+). Its pathway is amino-acid biosynthesis; L-lysine biosynthesis via DAP pathway; (S)-tetrahydrodipicolinate from L-aspartate: step 3/4. Functionally, catalyzes the condensation of (S)-aspartate-beta-semialdehyde [(S)-ASA] and pyruvate to 4-hydroxy-tetrahydrodipicolinate (HTPA). This chain is 4-hydroxy-tetrahydrodipicolinate synthase, found in Streptococcus suis (strain 98HAH33).